The sequence spans 132 residues: WSKIDIDVCGPLALQRCLIVYPWTQRYFGSFGDLSTVAAIMGNPKVAQHGVVALTGLRTALDHMDEIKSTYAALSVLHSEKLHVDPDNFRLLCECLTIVIAGKMGKKLSPDMQAAWQKYLCAVVSALGRQYH.

In terms of domain architecture, Globin spans 1 to 132 (WSKIDIDVCG…VVSALGRQYH (132 aa)). Heme b is bound by residues H49 and H78.

This sequence belongs to the globin family. As to quaternary structure, hb 1 is a heterotetramer of two alpha-1 and two beta-1 chains. Hb 2 is a heterotetramer of two alpha-2 and two beta-1 chains. As to expression, red blood cells.

In terms of biological role, involved in oxygen transport from gills to the various peripheral tissues. This chain is Hemoglobin subunit beta-1 (hbb1), found in Arctogadus glacialis (Arctic cod).